A 175-amino-acid chain; its full sequence is Major oleosin NAP-II (175 aa).

The polar stretch occupies residues 1-47 (RRDQYPRDRDQYSMIGRDRDKYSMIGRDRDQYNMYGRDYSKSRQIAK). 2 consecutive repeats follow at residues 17–26 (RDRDKYSMIG) and 27–36 (RDRDQYNMYG). Positions 48–119 (AVTAVTAGGS…AAITVFSWIY (72 aa)) are hydrophobic. The next 3 membrane-spanning stretches (helical) occupy residues 56-76 (GSLLVLSSLTLVGTVIALTVA), 78-98 (PLLVIFSPILVPALITVALLI), and 99-119 (TGFLSSGGFGIAAITVFSWIY). The tract at residues 151 to 175 (AQYYGQQQTGGEDDRDRTRGTQHTT) is disordered.

Belongs to the oleosin family.

Its subcellular location is the lipid droplet. The protein localises to the membrane. Functionally, may have a structural role to stabilize the lipid body during desiccation of the seed by preventing coalescence of the oil. Probably interacts with both lipid and phospholipid moieties of lipid bodies. May also provide recognition signals for specific lipase anchorage in lipolysis during seedling growth. The polypeptide is Major oleosin NAP-II (Brassica napus (Rape)).